A 747-amino-acid chain; its full sequence is AT-rich interactive domain-containing protein 4 (747 aa).

Positions 454 to 475 (PLPTRKRSEPCRESKEIENGGP) are disordered. Basic and acidic residues predominate over residues 459 to 471 (KRSEPCRESKEIE). The 105-residue stretch at 566–670 (VCSEEEFLRD…YLLEYEYAHD (105 aa)) folds into the ARID domain. The segment at 674 to 730 (GECCLICRSSTAGDWVNCGSCGEWAHFGCDRRPGLGAFKDYAKTDGLEYVCPNCSVS) adopts a PHD-type zinc-finger fold.

The protein localises to the nucleus. This is AT-rich interactive domain-containing protein 4 (ARID4) from Arabidopsis thaliana (Mouse-ear cress).